A 334-amino-acid chain; its full sequence is Beta-hexosaminidase (334 aa).

Substrate is bound by residues Asp60, Arg68, Arg133, and 163 to 164; that span reads KH. Residue His176 is the Proton donor/acceptor of the active site. Asp247 functions as the Nucleophile in the catalytic mechanism.

Belongs to the glycosyl hydrolase 3 family. NagZ subfamily.

The protein resides in the cytoplasm. The catalysed reaction is Hydrolysis of terminal non-reducing N-acetyl-D-hexosamine residues in N-acetyl-beta-D-hexosaminides.. Its pathway is cell wall biogenesis; peptidoglycan recycling. In terms of biological role, plays a role in peptidoglycan recycling by cleaving the terminal beta-1,4-linked N-acetylglucosamine (GlcNAc) from peptide-linked peptidoglycan fragments, giving rise to free GlcNAc, anhydro-N-acetylmuramic acid and anhydro-N-acetylmuramic acid-linked peptides. This Xanthomonas oryzae pv. oryzae (strain MAFF 311018) protein is Beta-hexosaminidase.